A 279-amino-acid chain; its full sequence is Probable endonuclease 4 (279 aa).

Positions 69, 109, 145, 179, 182, 216, 229, 231, and 261 each coordinate Zn(2+).

Belongs to the AP endonuclease 2 family. Requires Zn(2+) as cofactor.

It catalyses the reaction Endonucleolytic cleavage to 5'-phosphooligonucleotide end-products.. Endonuclease IV plays a role in DNA repair. It cleaves phosphodiester bonds at apurinic or apyrimidinic (AP) sites, generating a 3'-hydroxyl group and a 5'-terminal sugar phosphate. The protein is Probable endonuclease 4 of Chlorobium phaeovibrioides (strain DSM 265 / 1930) (Prosthecochloris vibrioformis (strain DSM 265)).